The following is a 53-amino-acid chain: MMIKVLLLLSSALVLFTPEAEGGCGCHTECSLQCSFSGCGYVCGLRCRCSWGK.

The signal sequence occupies residues 1 to 22 (MMIKVLLLLSSALVLFTPEAEG). Trp-51 carries the tryptophan amide modification.

Contains 4 disulfide bonds.

The protein localises to the secreted. It is found in the nematocyst. Functionally, in vivo, only causes a weak change in behavior in shrimps (C.multidentata) (slight twitching of the walking legs), but no lethal effect is observed. No activity is observed when injected into fly larvae (M.domestica). The sequence is that of Toxin CjTL7 from Epiactis japonica (Sea anemone).